A 295-amino-acid chain; its full sequence is Universal stress protein Mb2028c (295 aa).

ATP-binding positions include Gly-13, Gly-117–Ala-123, Ser-131–Val-132, Gly-165, Asp-198, Gly-262–Gly-268, and Ser-276–Ser-278.

The protein belongs to the universal stress protein A family.

In Mycobacterium bovis (strain ATCC BAA-935 / AF2122/97), this protein is Universal stress protein Mb2028c.